The sequence spans 533 residues: Basal body-orientation factor 1 (533 aa).

The segment at 1-30 (MPAKDKRKDKRKDKRKGKNKGKEPKKIIKS) is disordered. Residues 7–19 (RKDKRKDKRKGKN) show a composition bias toward basic residues. Residues 20 to 30 (KGKEPKKIIKS) are compositionally biased toward basic and acidic residues. Coiled coils occupy residues 34–207 (AIER…EAEK) and 246–368 (LKEA…VEQF). The interval 277-533 (VKEKIMQLTQ…PQGLQDSDIA (257 aa)) is interaction with MNS1 and ODF2. The span at 507–517 (QQAPVSDSNRM) shows a compositional bias: polar residues. The interval 507–533 (QQAPVSDSNRMVSPDVIPQGLQDSDIA) is disordered.

It belongs to the BBOF1 family. Interacts with MNS1 and ODF2. Expressed exclusively in the testis and predominantly expressed in male germ cells.

The protein localises to the cytoplasm. Its subcellular location is the cytoskeleton. It is found in the cilium basal body. It localises to the flagellum axoneme. Its function is as follows. Plays an essential role in sperm motility and male fertility by stabilizing the sperm flagellar axonemal structure. May be required for the stability of ODF2 and MANS1 proteins. Dispensable for the assembly and function of motile cilia. The chain is Basal body-orientation factor 1 from Mus musculus (Mouse).